The sequence spans 222 residues: PKHD-type hydroxylase PCC8801_2196 (222 aa).

Residues Arg78 to Ser175 form the Fe2OG dioxygenase domain. Residues His96, Asp98, and His156 each contribute to the Fe cation site. Arg166 is a binding site for 2-oxoglutarate.

Fe(2+) serves as cofactor. Requires L-ascorbate as cofactor.

The sequence is that of PKHD-type hydroxylase PCC8801_2196 from Rippkaea orientalis (strain PCC 8801 / RF-1) (Cyanothece sp. (strain PCC 8801)).